The primary structure comprises 157 residues: Small ribosomal subunit protein uS7c (157 aa).

It belongs to the universal ribosomal protein uS7 family. In terms of assembly, part of the 30S ribosomal subunit.

The protein resides in the plastid. Its subcellular location is the organellar chromatophore. One of the primary rRNA binding proteins, it binds directly to 16S rRNA where it nucleates assembly of the head domain of the 30S subunit. This chain is Small ribosomal subunit protein uS7c (rps7), found in Paulinella chromatophora.